Consider the following 103-residue polypeptide: Putative double-stranded DNA mimic protein HD_0986 (103 aa).

The protein belongs to the putative dsDNA mimic protein family.

Its function is as follows. May act as a double-stranded DNA (dsDNA) mimic. Probably regulates the activity of a dsDNA-binding protein. This chain is Putative double-stranded DNA mimic protein HD_0986, found in Haemophilus ducreyi (strain 35000HP / ATCC 700724).